Reading from the N-terminus, the 372-residue chain is Queuine tRNA-ribosyltransferase (372 aa).

The Proton acceptor role is filled by Asp-92. Substrate contacts are provided by residues 92–96, Asp-146, Gln-188, and Gly-215; that span reads DSGGF. Positions 246–252 are RNA binding; it reads GIGTLRE. Asp-265 serves as the catalytic Nucleophile. The segment at 270–274 is RNA binding; important for wobble base 34 recognition; the sequence is TRLGR. Cys-303, Cys-305, Cys-308, and His-334 together coordinate Zn(2+).

The protein belongs to the queuine tRNA-ribosyltransferase family. Homodimer. Within each dimer, one monomer is responsible for RNA recognition and catalysis, while the other monomer binds to the replacement base PreQ1. Zn(2+) serves as cofactor.

It catalyses the reaction 7-aminomethyl-7-carbaguanine + guanosine(34) in tRNA = 7-aminomethyl-7-carbaguanosine(34) in tRNA + guanine. It functions in the pathway tRNA modification; tRNA-queuosine biosynthesis. In terms of biological role, catalyzes the base-exchange of a guanine (G) residue with the queuine precursor 7-aminomethyl-7-deazaguanine (PreQ1) at position 34 (anticodon wobble position) in tRNAs with GU(N) anticodons (tRNA-Asp, -Asn, -His and -Tyr). Catalysis occurs through a double-displacement mechanism. The nucleophile active site attacks the C1' of nucleotide 34 to detach the guanine base from the RNA, forming a covalent enzyme-RNA intermediate. The proton acceptor active site deprotonates the incoming PreQ1, allowing a nucleophilic attack on the C1' of the ribose to form the product. After dissociation, two additional enzymatic reactions on the tRNA convert PreQ1 to queuine (Q), resulting in the hypermodified nucleoside queuosine (7-(((4,5-cis-dihydroxy-2-cyclopenten-1-yl)amino)methyl)-7-deazaguanosine). This is Queuine tRNA-ribosyltransferase from Synechococcus sp. (strain CC9605).